Reading from the N-terminus, the 201-residue chain is UPF0301 protein MSMEG_6921/MSMEI_6732 (201 aa).

The protein belongs to the UPF0301 (AlgH) family.

This Mycolicibacterium smegmatis (strain ATCC 700084 / mc(2)155) (Mycobacterium smegmatis) protein is UPF0301 protein MSMEG_6921/MSMEI_6732.